A 648-amino-acid chain; its full sequence is Sodium/nucleoside cotransporter 1 (648 aa).

Topologically, residues 1-83 (MADDTPRQRE…LCREHWQLFE (83 aa)) are cytoplasmic. A helical membrane pass occupies residues 84 to 104 (WISKGLLSTAYIGFLIVACLL). The Extracellular segment spans residues 105 to 108 (DFPR). A helical membrane pass occupies residues 109–129 (ALALFVITCVVLVFLAYNLLK). At 130–147 (RLLGSKLKKCVKFQGHSC) the chain is on the cytoplasmic side. Residues 148–168 (LSLWLKRGLALAAGLGVILWL) form a helical membrane-spanning segment. Topologically, residues 169–175 (SLDTAQR) are extracellular. A helical transmembrane segment spans residues 176–196 (PEQLVSFAGICVFLVLLFAGS). Over 197-201 (KHHRA) the chain is Cytoplasmic. A helical membrane pass occupies residues 202-222 (VSWRAVSWGLGLQFVLGLFVI). The Extracellular portion of the chain corresponds to 223–265 (RTEPGFVAFQWLGDQIRVFLSYTEAGSSFVFGEALVKDVFAFQ). The helical transmembrane segment at 266-286 (VLPIIVFFSCVMSVLYYLGLM) threads the bilayer. Over 287 to 294 (QWVILKIA) the chain is Cytoplasmic. A helical transmembrane segment spans residues 295 to 318 (WLMQVTMGTSATETLSVAGNIFVS). Topologically, residues 319–339 (QTEAPLLIRPYLADMTLSEVH) are extracellular. A helical transmembrane segment spans residues 340–360 (VVMTGGYATIAGSLLGAYISF). Residue G361 is a topological domain, cytoplasmic. Residues 362-380 (IDASSLIAASVMAAPCALA) form a helical membrane-spanning segment. Residues 381 to 427 (LSKLVYPEVEESKFRSEEGVKLTYGDAQNLVEAASAGAAISVKVVAN) lie on the Extracellular side of the membrane. A helical transmembrane segment spans residues 428–448 (IAANLIAFLAVLAFINAALSW). The Cytoplasmic segment spans residues 449–470 (LGDMVDIQGLSFQLICSYVLRP). The helical transmembrane segment at 471-491 (VAFLMGVAWEDCPVVAELLGI) threads the bilayer. Topologically, residues 492–531 (KLFLNEFVAYQELSQYKQRRLAGAEEWLGDKKQWISVRAE) are extracellular. The chain crosses the membrane as a helical span at residues 532 to 552 (ILTTYALCGFANFSSIGIMLG). At 553–571 (GLTSMVPQRRSDFSQIVLR) the chain is on the cytoplasmic side. The chain crosses the membrane as a helical span at residues 572–592 (ALITGAFVSLVNACVAGILYV). At 593-648 (PRGVEVDCMSLLNQTVSSSSFEVYLCCRQVFQNTSLEFGQEALHNCCRFYNHTVCT) the chain is on the extracellular side. 3 N-linked (GlcNAc...) asparagine glycosylation sites follow: N605, N625, and N643.

This sequence belongs to the concentrative nucleoside transporter (CNT) (TC 2.A.41) family. In terms of processing, N-glycosylated. N-glycosylation is required for localization to the plasma membrane and the transporter activity.

The protein localises to the cell membrane. It localises to the apical cell membrane. It carries out the reaction uridine(out) + Na(+)(out) = uridine(in) + Na(+)(in). The enzyme catalyses thymidine(out) + Na(+)(out) = thymidine(in) + Na(+)(in). It catalyses the reaction cytidine(out) + Na(+)(out) = cytidine(in) + Na(+)(in). The catalysed reaction is adenosine(out) + Na(+)(out) = adenosine(in) + Na(+)(in). With respect to regulation, due to its high apparent affinity but slow transport, adenosine could act as a negative regulator of pyrimidine transport under some conditions. In terms of biological role, sodium and pyrimidine nucleoside symporter of the plasma membrane that imports uridine, thymidine and cytidine into cells by coupling their transport to the transmembrane sodium electrochemical gradient. Also transports adenosine, an atypical substrate transported with high apparent affinity, but low maximum velocity. Therefore, exhibits the transport characteristics of the nucleoside transport system cit or N2 subtype (N2/cit). Involved in renal nucleoside (re)absorption. The polypeptide is Sodium/nucleoside cotransporter 1 (Mus musculus (Mouse)).